A 65-amino-acid chain; its full sequence is Large ribosomal subunit protein uL29c (65 aa).

Belongs to the universal ribosomal protein uL29 family.

The protein localises to the plastid. It localises to the chloroplast. In Guillardia theta (Cryptophyte), this protein is Large ribosomal subunit protein uL29c (rpl29).